Reading from the N-terminus, the 95-residue chain is MSVTKKDVAYIAELARLKFGDTEMETMTVELNNILHYIDKLNEVDTEGVQPLSSIHDESNVLRADIEKTSISTDQVLLNAPDRQDRFFKVPKVIG.

It belongs to the GatC family. Heterotrimer of A, B and C subunits.

The enzyme catalyses L-glutamyl-tRNA(Gln) + L-glutamine + ATP + H2O = L-glutaminyl-tRNA(Gln) + L-glutamate + ADP + phosphate + H(+). It catalyses the reaction L-aspartyl-tRNA(Asn) + L-glutamine + ATP + H2O = L-asparaginyl-tRNA(Asn) + L-glutamate + ADP + phosphate + 2 H(+). In terms of biological role, allows the formation of correctly charged Asn-tRNA(Asn) or Gln-tRNA(Gln) through the transamidation of misacylated Asp-tRNA(Asn) or Glu-tRNA(Gln) in organisms which lack either or both of asparaginyl-tRNA or glutaminyl-tRNA synthetases. The reaction takes place in the presence of glutamine and ATP through an activated phospho-Asp-tRNA(Asn) or phospho-Glu-tRNA(Gln). The sequence is that of Aspartyl/glutamyl-tRNA(Asn/Gln) amidotransferase subunit C from Chlorobium phaeobacteroides (strain DSM 266 / SMG 266 / 2430).